Reading from the N-terminus, the 170-residue chain is Large ribosomal subunit protein uL18c (170 aa).

A chloroplast-targeting transit peptide spans 1–63 (MLASPALAGA…QADRIARHVR (63 aa)).

Belongs to the universal ribosomal protein uL18 family. In terms of assembly, part of the 50S ribosomal subunit; contacts the 5S rRNA.

It is found in the plastid. The protein localises to the chloroplast. In terms of biological role, binds 5S rRNA, forms part of the central protuberance of the 50S subunit. The chain is Large ribosomal subunit protein uL18c (RPL18) from Oryza sativa subsp. japonica (Rice).